Here is a 1222-residue protein sequence, read N- to C-terminus: PAN2-PAN3 deadenylation complex catalytic subunit PAN2 (1222 aa).

2 WD repeats span residues 104 to 143 and 276 to 315; these read PEMT…IVDQ and ANVA…HFNE. The tract at residues 316–451 is linker; it reads IGKETEFSDI…GLKINGETKE (136 aa). A USP domain is found at 452–821; the sequence is DPLLKYSNVE…SPCTLAYQIS (370 aa). The Exonuclease domain occupies 871–1027; the sequence is ALDTEFVDLE…WAVFKEYIQE (157 aa). Positions 873, 875, and 982 each coordinate a divalent metal cation. The tract at residues 1035–1067 is disordered; it reads TSITTTTNPNIHDANTSTTTTTAITTTPPEGHD. Residues 1050–1061 are compositionally biased toward low complexity; the sequence is TSTTTTTAITTT. Position 1071 (Asp1071) interacts with a divalent metal cation. Disordered stretches follow at residues 1110–1152 and 1167–1222; these read PARY…LSGR and ASVT…SPMR. Low complexity predominate over residues 1119 to 1133; sequence PNPNNNNINNGVNPN. Over residues 1134–1144 the composition is skewed to polar residues; it reads GLSTPGSTNPI. The span at 1180 to 1191 shows a compositional bias: low complexity; sequence NGSMSGSTPSTP. Residues 1207-1216 are compositionally biased toward gly residues; that stretch reads SFGGAKGLTF.

The protein belongs to the peptidase C19 family. PAN2 subfamily. In terms of assembly, forms a heterotrimer with an asymmetric homodimer of the regulatory subunit PAN3 to form the poly(A)-nuclease (PAN) deadenylation complex. The cofactor is a divalent metal cation.

Its subcellular location is the cytoplasm. It catalyses the reaction Exonucleolytic cleavage of poly(A) to 5'-AMP.. Positively regulated by the regulatory subunit PAN3. Functionally, catalytic subunit of the poly(A)-nuclease (PAN) deadenylation complex, one of two cytoplasmic mRNA deadenylases involved in mRNA turnover. PAN specifically shortens poly(A) tails of RNA and the activity is stimulated by poly(A)-binding protein PAB1. PAN deadenylation is followed by rapid degradation of the shortened mRNA tails by the CCR4-NOT complex. Deadenylated mRNAs are then degraded by two alternative mechanisms, namely exosome-mediated 3'-5' exonucleolytic degradation, or deadenylation-dependent mRNA decaping and subsequent 5'-3' exonucleolytic degradation by XRN1. May also be involved in post-transcriptional maturation of mRNA poly(A) tails. The polypeptide is PAN2-PAN3 deadenylation complex catalytic subunit PAN2 (Coccidioides immitis (strain RS) (Valley fever fungus)).